The sequence spans 444 residues: MEQNADMEPDRQVNQRPPRFRARGAGVRGRGRVRRSAFSRGQRRPIIRVDDLQLPDPLYVMQALQRDHTLEMPRGQVDFSWIEAEERRVGPTDEWYFEAVKTYKAKPGDDLQTIIKNYAKISLECGAVYEINSKIRVTGACYIIGNCAVLRPNLPAGEAMFEVLNVDFIPSIGFMERIVFSNVIFDCRTTATVVCCISERNTLFHNCVFSGPHMLCLDLRAGAEVRGCHFVGAVCALRSKGLYSIRVKNSIFEKCAFGVVTGSKASISHCMFKDCTCSIMLGGQGTIAHSQFIVTTSAEAPMNLQLCTCEGNGSHVVPLGNIHFASHREASWPTFYANTLVRVRLYMGRRRGVFHPKQSTLSMCVIAAPRGVVQRIYLFGVYDATCAIMQLGEAGNAASERLCTCGFRHSTPSLRATYVTDTRIDRELNSQDTAEFFSSDEDNF.

The disordered stretch occupies residues 1-35; it reads MEQNADMEPDRQVNQRPPRFRARGAGVRGRGRVRR. Residues S438 and S439 each carry the phosphoserine modification.

This sequence belongs to the adenoviridae E1B 55 kDa protein family. In terms of assembly, interacts with host PML-4 and PML-5; this interaction promotes efficient subnuclear targeting of E1B-55K to PML nuclear bodies. Interacts with E4-ORF3 protein. Interacts with E4-ORF6 protein.

It localises to the host nucleus. It is found in the host cytoplasm. Its function is as follows. Plays a major role to prevent cellular inhibition of viral genome replication. Assembles an SCF-like E3 ubiquitin ligase complex based on the cellular proteins ELOB, ELOC, CUL5 and RBX1, in cooperation with viral E4orf6. This viral RING-type ligase ubiquitinates cellular substrates and targets them to proteasomal degradation: TP53/p53, LIG4, MRE11-RAD50-NBS1 (MRN) complex, ITGA3, DAXX and BLM. E1B-55K probably acts as the substrate-specific adapter of the SCF-like E3 ubiquitin ligase complex. Degradation of host TP53/p53 activity is essential for preventing E1A-induced TP53 accumulation that would otherwise lead to cell apoptosis and growth arrest. E1B-55K also inactivates TP53 transcription-factor activity by binding its transactivation domain. E1B-55K also functions as a SUMO1 E3 ligase for TP53 which causes the latter to be sequestered in promyelocytic leukemia (PML) nuclear bodies thereby contributing to maximal inhibition of TP53 function. The protein is E1B 55 kDa protein of Canis lupus familiaris (Dog).